Here is a 591-residue protein sequence, read N- to C-terminus: Aspartate--tRNA(Asp/Asn) ligase (591 aa).

Position 174 (E174) interacts with L-aspartate. An aspartate region spans residues 198–201 (QLFK). R220 is an L-aspartate binding site. ATP-binding positions include 220–222 (RDE) and Q229. An L-aspartate-binding site is contributed by H450. Position 483 (E483) interacts with ATP. R490 lines the L-aspartate pocket. 535–538 (GLDR) contacts ATP.

Belongs to the class-II aminoacyl-tRNA synthetase family. Type 1 subfamily. Homodimer.

It is found in the cytoplasm. It catalyses the reaction tRNA(Asx) + L-aspartate + ATP = L-aspartyl-tRNA(Asx) + AMP + diphosphate. Functionally, aspartyl-tRNA synthetase with relaxed tRNA specificity since it is able to aspartylate not only its cognate tRNA(Asp) but also tRNA(Asn). Reaction proceeds in two steps: L-aspartate is first activated by ATP to form Asp-AMP and then transferred to the acceptor end of tRNA(Asp/Asn). The chain is Aspartate--tRNA(Asp/Asn) ligase from Pseudomonas syringae pv. tomato (strain ATCC BAA-871 / DC3000).